The sequence spans 246 residues: Homeobox protein Hox-B4a (246 aa).

The segment at 23 to 125 (YSQSDYLPSH…SQNTSTVSSR (103 aa)) is disordered. 2 stretches are compositionally biased toward polar residues: residues 39-48 (AQRQDPSFQH) and 112-123 (QTPTSQNTSTVS). Positions 130-135 (VYPWMK) match the Antp-type hexapeptide motif. A DNA-binding region (homeobox) is located at residues 151–210 (PKRSRTAYTRQQVLELEKEFHYNRYLTRRRRVEIAHTLCLSERQIKIWFQNRRMKWKKDH). Positions 210–246 (HKLPNTKIRSNSASTNSSGCPTLCSNQSRASGPPPSL) are disordered. Positions 216-239 (KIRSNSASTNSSGCPTLCSNQSRA) are enriched in polar residues.

It belongs to the Antp homeobox family. Deformed subfamily.

It is found in the nucleus. In terms of biological role, sequence-specific transcription factor which is part of a developmental regulatory system that provides cells with specific positional identities on the anterior-posterior axis. In Danio rerio (Zebrafish), this protein is Homeobox protein Hox-B4a (hoxb4a).